The sequence spans 88 residues: N(2)-fixation sustaining protein CowN (88 aa).

The protein belongs to the CowN family.

Its function is as follows. Is required to sustain N(2)-dependent growth in the presence of low levels of carbon monoxide (CO). Probably acts by protecting the N(2) fixation ability of the nitrogenase complex, which is inactivated in the presence of CO. This Rhodomicrobium vannielii (strain ATCC 17100 / DSM 162 / LMG 4299 / NCIMB 10020 / ATH 3.1.1) protein is N(2)-fixation sustaining protein CowN.